The following is a 228-amino-acid chain: Caspase recruitment domain-containing protein 19 (228 aa).

Cysteine 7 and cysteine 77 are oxidised to a cystine. Residues 8 to 99 (DRLVQDTPFL…PLHSRLPSRH (92 aa)) form the CARD domain. A Phosphoserine modification is found at valine 113.

In terms of assembly, associates with BCL10 by CARD-CARD interaction. As to expression, expressed in ovary, testis, placenta, skeletal muscle, kidney, lung, heart and liver (at protein level). Expressed in thymus and brain.

The protein localises to the nucleus. Its subcellular location is the endoplasmic reticulum membrane. It is found in the mitochondrion membrane. In terms of biological role, plays a role in inhibiting the effects of BCL10-induced activation of NF-kappa-B. May inhibit the phosphorylation of BCL10 in a CARD-dependent manner. The protein is Caspase recruitment domain-containing protein 19 (CARD19) of Homo sapiens (Human).